The sequence spans 776 residues: Protein translocase subunit SecA 2 (776 aa).

Residues Gln80, 98-102, and Asp486 contribute to the ATP site; that span reads GEGKT.

It belongs to the SecA family. In terms of assembly, monomer and homodimer. Part of the essential Sec protein translocation apparatus which comprises SecA, SecYEG and auxiliary proteins SecDF. Other proteins may also be involved.

The protein resides in the cell membrane. The protein localises to the cytoplasm. It carries out the reaction ATP + H2O + cellular proteinSide 1 = ADP + phosphate + cellular proteinSide 2.. Part of the Sec protein translocase complex. Interacts with the SecYEG preprotein conducting channel. Has a central role in coupling the hydrolysis of ATP to the transfer of proteins into and across the cell membrane, serving as an ATP-driven molecular motor driving the stepwise translocation of polypeptide chains across the membrane. The chain is Protein translocase subunit SecA 2 from Listeria monocytogenes serotype 4b (strain F2365).